Here is an 827-residue protein sequence, read N- to C-terminus: Leucine--tRNA ligase (827 aa).

Residues 42-52 (PYPSGNLHMGH) carry the 'HIGH' region motif. Residues 583–587 (KMSKS) carry the 'KMSKS' region motif. Lys-586 lines the ATP pocket.

It belongs to the class-I aminoacyl-tRNA synthetase family.

The protein localises to the cytoplasm. It carries out the reaction tRNA(Leu) + L-leucine + ATP = L-leucyl-tRNA(Leu) + AMP + diphosphate. The chain is Leucine--tRNA ligase from Desulfitobacterium hafniense (strain DSM 10664 / DCB-2).